A 394-amino-acid chain; its full sequence is Fatty acid resistance protein FarA (394 aa).

The interval Met1 to Thr23 is disordered. The chain crosses the membrane as a helical span at residues Ala33–Trp53. The tract at residues Ser356–Thr376 is disordered.

This sequence belongs to the membrane fusion protein (MFP) (TC 8.A.1) family. In terms of assembly, probably part of a tripartite efflux system FarAB-MtrE, which is composed of an inner membrane transporter, FarB, a periplasmic membrane fusion protein, FarA, and an outer membrane component, MtrE.

Its subcellular location is the cell inner membrane. Its function is as follows. Mediates resistance to long-chained antibacterial fatty acids (FAs). Function is dependent on the MtrE outer membrane protein. This chain is Fatty acid resistance protein FarA, found in Neisseria gonorrhoeae.